A 108-amino-acid chain; its full sequence is UPF0102 protein WS0451 (108 aa).

This sequence belongs to the UPF0102 family.

The polypeptide is UPF0102 protein WS0451 (Wolinella succinogenes (strain ATCC 29543 / DSM 1740 / CCUG 13145 / JCM 31913 / LMG 7466 / NCTC 11488 / FDC 602W) (Vibrio succinogenes)).